The primary structure comprises 249 residues: NAD kinase (249 aa).

The active-site Proton acceptor is the D45. NAD(+) is bound by residues 45–46, R50, 110–111, D138, and 149–154; these read DG, NE, and SGWGMS.

It belongs to the NAD kinase family. It depends on a divalent metal cation as a cofactor.

The protein resides in the cytoplasm. It catalyses the reaction NAD(+) + ATP = ADP + NADP(+) + H(+). Functionally, involved in the regulation of the intracellular balance of NAD and NADP, and is a key enzyme in the biosynthesis of NADP. Catalyzes specifically the phosphorylation on 2'-hydroxyl of the adenosine moiety of NAD to yield NADP. The chain is NAD kinase from Saccharolobus islandicus (strain Y.N.15.51 / Yellowstone #2) (Sulfolobus islandicus).